The primary structure comprises 575 residues: Proline--tRNA ligase 1 (575 aa).

The protein belongs to the class-II aminoacyl-tRNA synthetase family. ProS type 1 subfamily. As to quaternary structure, homodimer.

Its subcellular location is the cytoplasm. It carries out the reaction tRNA(Pro) + L-proline + ATP = L-prolyl-tRNA(Pro) + AMP + diphosphate. Catalyzes the attachment of proline to tRNA(Pro) in a two-step reaction: proline is first activated by ATP to form Pro-AMP and then transferred to the acceptor end of tRNA(Pro). As ProRS can inadvertently accommodate and process non-cognate amino acids such as alanine and cysteine, to avoid such errors it has two additional distinct editing activities against alanine. One activity is designated as 'pretransfer' editing and involves the tRNA(Pro)-independent hydrolysis of activated Ala-AMP. The other activity is designated 'posttransfer' editing and involves deacylation of mischarged Ala-tRNA(Pro). The misacylated Cys-tRNA(Pro) is not edited by ProRS. The chain is Proline--tRNA ligase 1 from Anaeromyxobacter dehalogenans (strain 2CP-C).